We begin with the raw amino-acid sequence, 155 residues long: Probable tellurium resistance transcriptional regulator TerW (155 aa).

Its function is as follows. Involved in tellurite resistance. TerW binds specifically to the potential promoter region of the terZABCDE operon and probably regulates expression of the genes. This is Probable tellurium resistance transcriptional regulator TerW from Escherichia coli.